Here is a 34-residue protein sequence, read N- to C-terminus: Voltage sensor toxin 3 (34 aa).

Disulfide bonds link Cys2-Cys17, Cys9-Cys22, and Cys16-Cys29.

It belongs to the neurotoxin 10 (Hwtx-1) family. 61 (VSTX3) subfamily. In terms of tissue distribution, expressed by the venom gland.

Its subcellular location is the secreted. Its function is as follows. Potent voltage-gated sodium channel blocker (IC(50)=190 nM and 210 nM on human and rat Nav1.3/SCN3A respectively, 430 nM on human Nav1.7/SCN9A, 770 nM and 290 nM on human and rat Nav1.8/SCN10A, respectively). Binds the voltage-sensor domain of the potassium channel KvAP (from Aeropyrum pernix) and weakly inhibits this channel. The sequence is that of Voltage sensor toxin 3 from Grammostola rosea (Chilean rose tarantula).